Consider the following 158-residue polypeptide: Transcription elongation factor GreA (158 aa).

A coiled-coil region spans residues 47-74 (NSEYDEAKNEQAFTEGRIIQLENMLKNA).

The protein belongs to the GreA/GreB family.

Necessary for efficient RNA polymerase transcription elongation past template-encoded arresting sites. The arresting sites in DNA have the property of trapping a certain fraction of elongating RNA polymerases that pass through, resulting in locked ternary complexes. Cleavage of the nascent transcript by cleavage factors such as GreA or GreB allows the resumption of elongation from the new 3'terminus. GreA releases sequences of 2 to 3 nucleotides. This is Transcription elongation factor GreA from Clostridium perfringens (strain ATCC 13124 / DSM 756 / JCM 1290 / NCIMB 6125 / NCTC 8237 / Type A).